Consider the following 418-residue polypeptide: F420-non-reducing hydrogenase vhu subunit A (418 aa).

Ni(2+) contacts are provided by cysteine 61 and cysteine 64.

The protein belongs to the [NiFe]/[NiFeSe] hydrogenase large subunit family. In terms of assembly, the F420-non-reducing hydrogenase vhu is composed of four subunits; VhuA, VhuD, VhuG and VhuU. Requires Ni(2+) as cofactor.

This is F420-non-reducing hydrogenase vhu subunit A (vhuA) from Methanocaldococcus jannaschii (strain ATCC 43067 / DSM 2661 / JAL-1 / JCM 10045 / NBRC 100440) (Methanococcus jannaschii).